The primary structure comprises 57 residues: uncharacterized protein (57 aa).

This is an uncharacterized protein from Thermoproteus tenax virus 1 (strain KRA1) (TTV1).